Consider the following 130-residue polypeptide: Small ribosomal subunit protein uS8 (130 aa).

This sequence belongs to the universal ribosomal protein uS8 family. As to quaternary structure, part of the 30S ribosomal subunit.

Functionally, one of the primary rRNA binding proteins, it binds directly to 16S rRNA central domain where it helps coordinate assembly of the platform of the 30S subunit. This chain is Small ribosomal subunit protein uS8, found in Haloarcula marismortui (strain ATCC 43049 / DSM 3752 / JCM 8966 / VKM B-1809) (Halobacterium marismortui).